The sequence spans 382 residues: Alpha-2B adrenergic receptor (382 aa).

A helical membrane pass occupies residues 1–25 (AIAAVITFLILFTIFGNALVILAVL). At 26 to 36 (TSRSLRAPQNL) the chain is on the cytoplasmic side. A helical transmembrane segment spans residues 37–62 (FLVSLAAADILVATLIIPFSLANELL). Residues 63–72 (GYWYFRHTWC) are Extracellular-facing. A disulfide bridge connects residues cysteine 72 and cysteine 151. Residues 73 to 95 (EVYLALDVLFCTSSIVHLCAISL) traverse the membrane as a helical segment. At 96-117 (DRYWSVSRALEYNSKRTPRRIK) the chain is on the cytoplasmic side. A helical membrane pass occupies residues 118 to 140 (GIILTVWLIAAFISLPPLIYKGD). Residues 141–156 (KGKKPGGRPQCKLNEE) lie on the Extracellular side of the membrane. The chain crosses the membrane as a helical span at residues 157–180 (AWYILSSSIGSFFAPCLIMILVYL). The Cytoplasmic segment spans residues 181 to 346 (RIYLIAKRRN…MNREKRFTFV (166 aa)). The segment at 192–305 (QGPHGKQAPG…QGTPNFQPSQ (114 aa)) is disordered. The segment covering 271 to 284 (EEEEEEEEEEEEEC) has biased composition (acidic residues). Over residues 291 to 305 (TSSSLQGTPNFQPSQ) the composition is skewed to polar residues. The chain crosses the membrane as a helical span at residues 347–370 (LAVVIGVFVLCWFPFFFSYSLGAI). Topologically, residues 371–379 (CPQHCKVPH) are extracellular. A helical transmembrane segment spans residues 380–382 (GLF).

The protein belongs to the G-protein coupled receptor 1 family. Adrenergic receptor subfamily. ADRA2B sub-subfamily. In terms of assembly, interacts with RAB26. Interacts with PPP1R9B. Interacts with GGA1, GGA2 and GGA3.

It localises to the cell membrane. Functionally, alpha-2 adrenergic receptors mediate the catecholamine-induced inhibition of adenylate cyclase through the action of G proteins. This chain is Alpha-2B adrenergic receptor (ADRA2B), found in Didelphis virginiana (North American opossum).